Reading from the N-terminus, the 248-residue chain is MPRFKLLIEYDGAPFVGWQRQANGFSVQEAIETALGGFTGESVAIHGAGRTDAGVHARGQVAHVDFSRDWRPDVLRDAANAWLRPNPIAILKAERVDDEFSARFSAVRRHYLYKIINRRASLTLEAGRCWAIRRSLDAGAMHEAAQTLLGFHDFSTFRDSECQAESPLRTLERFDVLRDGENIEIHVAARSFLHSQVRSMVGSLAHVGSGKWRVEDMAEALAAKDRRRCGVVAPPEGLYLMQVDYEEA.

The active-site Nucleophile is aspartate 52. A substrate-binding site is contributed by tyrosine 111.

It belongs to the tRNA pseudouridine synthase TruA family. Homodimer.

The catalysed reaction is uridine(38/39/40) in tRNA = pseudouridine(38/39/40) in tRNA. Functionally, formation of pseudouridine at positions 38, 39 and 40 in the anticodon stem and loop of transfer RNAs. The chain is tRNA pseudouridine synthase A from Methylocella silvestris (strain DSM 15510 / CIP 108128 / LMG 27833 / NCIMB 13906 / BL2).